We begin with the raw amino-acid sequence, 921 residues long: Retinoblastoma-associated protein (921 aa).

Disordered stretches follow at residues 1–31 and 603–634; these read MPPK…PPGG and RSPK…QKPQ. Residues 612 to 634 are compositionally biased toward polar residues; that stretch reads HPQSGTSNPDAQPSATSQTQKPQ. The short motif at 853–869 is the Bipartite nuclear localization signal element; that stretch reads KRSAEPSDAPKPLKRLR. The segment at 873–921 is disordered; the sequence is EGQDEADGGKHLPQESKFQQKLAEMTSTRTRMQKQKLNDGNDTSANEEK. Polar residues predominate over residues 910–921; it reads NDGNDTSANEEK.

This sequence belongs to the retinoblastoma protein (RB) family. Interacts with and sequesters the E2F1 transcription factor, thereby inhibiting E2F1 transcription. Interacts with SUV39H1, KMT5B and KMT5C. In terms of assembly, (Microbial infection) Interacts with, and is inhibited by fowl adenovirus 1 protein GAM-1. In terms of processing, phosphorylated in G1, thereby releasing E2F1 which is then able to activate cell growth. Dephosphorylated at the late M phase. Phosphorylation of domain C promotes interaction between the C-terminal domain C and the Pocket domain, and thereby inhibits interactions with heterodimeric E2F/DP transcription factor complexes.

It localises to the nucleus. The protein resides in the cytoplasm. Functionally, tumor suppressor that is a key regulator of the G1/S transition of the cell cycle. The hypophosphorylated form binds transcription regulators of the E2F family, preventing transcription of E2F-responsive genes. Both physically blocks E2Fs transactivating domain and recruits chromatin-modifying enzymes that actively repress transcription. Cyclin and CDK-dependent phosphorylation of RB1 induces its dissociation from E2Fs, thereby activating transcription of E2F responsive genes and triggering entry into S phase. RB1 also promotes the G0-G1 transition upon phosphorylation and activation by CDK3/cyclin-C. The sequence is that of Retinoblastoma-associated protein (RB1) from Gallus gallus (Chicken).